Consider the following 224-residue polypeptide: Thymidine kinase (224 aa).

Residues 19 to 26 (GPMFAGKT) and 93 to 96 (DEVQ) each bind ATP. Glu94 acts as the Proton acceptor in catalysis. Zn(2+) is bound by residues Cys150, Cys153, Cys188, and His191.

Belongs to the thymidine kinase family. In terms of assembly, homotetramer.

The protein localises to the cytoplasm. The catalysed reaction is thymidine + ATP = dTMP + ADP + H(+). In Mycoplasmoides gallisepticum (strain R(low / passage 15 / clone 2)) (Mycoplasma gallisepticum), this protein is Thymidine kinase.